The primary structure comprises 340 residues: Lipopolysaccharide core biosynthesis glycosyltransferase LpsE (340 aa).

The protein belongs to the glycosyltransferase group 1 family. Glycosyltransferase 4 subfamily.

Its pathway is bacterial outer membrane biogenesis; LPS core biosynthesis. The sequence is that of Lipopolysaccharide core biosynthesis glycosyltransferase LpsE (lpsE) from Rhizobium meliloti (strain 1021) (Ensifer meliloti).